We begin with the raw amino-acid sequence, 101 residues long: MIFQSYLLIAASMFCIGLYGLLTSRNVVRVLMSLELLLNAVNLNLLTFSNFVDSHEMKGQVLALFVIALAAAEAAIGLAIILSIYRNQRTVDPEQFNLLKW.

3 helical membrane passes run isoleucine 2–leucine 22, methionine 32–valine 52, and valine 61–isoleucine 81.

The protein belongs to the complex I subunit 4L family. As to quaternary structure, NDH is composed of at least 16 different subunits, 5 of which are encoded in the nucleus.

The protein resides in the plastid. Its subcellular location is the chloroplast thylakoid membrane. It catalyses the reaction a plastoquinone + NADH + (n+1) H(+)(in) = a plastoquinol + NAD(+) + n H(+)(out). The catalysed reaction is a plastoquinone + NADPH + (n+1) H(+)(in) = a plastoquinol + NADP(+) + n H(+)(out). NDH shuttles electrons from NAD(P)H:plastoquinone, via FMN and iron-sulfur (Fe-S) centers, to quinones in the photosynthetic chain and possibly in a chloroplast respiratory chain. The immediate electron acceptor for the enzyme in this species is believed to be plastoquinone. Couples the redox reaction to proton translocation, and thus conserves the redox energy in a proton gradient. This chain is NAD(P)H-quinone oxidoreductase subunit 4L, chloroplastic, found in Nephroselmis olivacea (Green alga).